We begin with the raw amino-acid sequence, 314 residues long: Pantothenate kinase (314 aa).

93–100 is an ATP binding site; that stretch reads GSVAVGKS.

It belongs to the prokaryotic pantothenate kinase family.

The protein resides in the cytoplasm. The catalysed reaction is (R)-pantothenate + ATP = (R)-4'-phosphopantothenate + ADP + H(+). Its pathway is cofactor biosynthesis; coenzyme A biosynthesis; CoA from (R)-pantothenate: step 1/5. This chain is Pantothenate kinase, found in Shewanella denitrificans (strain OS217 / ATCC BAA-1090 / DSM 15013).